Reading from the N-terminus, the 116-residue chain is Tachykinin-3 (116 aa).

The N-terminal stretch at 1 to 20 (MRSAMLFAAVLALSLAWTFG) is a signal peptide. Residues 21–79 (AACEEPQEQGGRLSKDSDLSLLPPPLLRRLYDSRSISLEGLLKVLSKASVGPKETSLPQ) constitute a propeptide that is removed on maturation. Met91 carries the post-translational modification Methionine amide. The interval 92–116 (GKRNSQPDTPADVVEENTPSFGVLK) is disordered. Positions 95-116 (NSQPDTPADVVEENTPSFGVLK) are excised as a propeptide.

This sequence belongs to the tachykinin family.

Its subcellular location is the secreted. In terms of biological role, tachykinins are active peptides which excite neurons, evoke behavioral responses, are potent vasodilators and secretagogues, and contract (directly or indirectly) many smooth muscles. Is a critical central regulator of gonadal function. This is Tachykinin-3 (Tac3) from Rattus norvegicus (Rat).